The following is a 171-amino-acid chain: uncharacterized protein (171 aa).

An N-terminal signal peptide occupies residues 1-24 (MIFDSLTMTQSSLSLLLLTGAIFS). Topologically, residues 25–70 (ISALYLTLFHRCATFSATSDLFLLVPLKFVSRDINDRLKTHYHHSC) are extracellular. The chain crosses the membrane as a helical span at residues 71–91 (LGSPFLCIIFLFISPLLNYHF). The Cytoplasmic portion of the chain corresponds to 92 to 140 (RSLVRPPKIHQKGSIPTLTKNAETRCSHHLKQAAATGEVCKVVVIIKGH). A helical membrane pass occupies residues 141 to 161 (ILKDCSIFFFIIFPLIYPLFI). The Extracellular portion of the chain corresponds to 162–171 (NCSSKYNGLQ).

It localises to the membrane. This is an uncharacterized protein from Saccharomyces cerevisiae (strain ATCC 204508 / S288c) (Baker's yeast).